Here is a 136-residue protein sequence, read N- to C-terminus: Large ribosomal subunit protein uL16 (136 aa).

This sequence belongs to the universal ribosomal protein uL16 family. Part of the 50S ribosomal subunit.

In terms of biological role, binds 23S rRNA and is also seen to make contacts with the A and possibly P site tRNAs. This Buchnera aphidicola subsp. Baizongia pistaciae (strain Bp) protein is Large ribosomal subunit protein uL16.